The primary structure comprises 531 residues: Achacin (531 aa).

The first 22 residues, 1–22 (MLLLNSALFILCLVCWLPGTSS), serve as a signal peptide directing secretion. The propeptide occupies 23–29 (SRVLTRR). N112, N150, N308, and N392 each carry an N-linked (GlcNAc...) asparagine glycan.

To A.kurodai aplysianin-A. As to quaternary structure, homodimer. In terms of tissue distribution, collar tissue.

Its function is as follows. Antibacterial glycoprotein. This Lissachatina fulica (Giant African land snail) protein is Achacin.